The sequence spans 621 residues: Chaperone protein HtpG (621 aa).

Residues 1 to 341 form an a; substrate-binding region; sequence MSNQEYTFQT…SEDLPLNVSR (341 aa). The interval 342–547 is b; the sequence is EILQQNKILA…GDEPNAMMAN (206 aa). Residues 548-621 form a c region; it reads WMRQMGQSVP…RLNSVLLKAL (74 aa).

This sequence belongs to the heat shock protein 90 family. In terms of assembly, homodimer.

The protein localises to the cytoplasm. Its function is as follows. Molecular chaperone. Has ATPase activity. The protein is Chaperone protein HtpG of Helicobacter pylori (strain J99 / ATCC 700824) (Campylobacter pylori J99).